The primary structure comprises 63 residues: uncharacterized protein (63 aa).

2 helical membrane-spanning segments follow: residues 3–23 and 42–62; these read VFLI…VYYI and ALVC…TKLL.

The protein resides in the cell membrane. This is an uncharacterized protein from Bacillus subtilis (strain 168).